The following is a 475-amino-acid chain: UDP-glucosyltransferase UGT13248 (475 aa).

Over residues 1-17 (METTVTAVSGTTSSSVG) the composition is skewed to low complexity. Positions 1–20 (METTVTAVSGTTSSSVGHGA) are disordered. Residues histidine 38, serine 152, threonine 299, cysteine 352, 369 to 377 (HCGWNSTLE), and 393 to 394 (DQ) each bind UDP-alpha-D-glucose.

Belongs to the UDP-glycosyltransferase family.

Involved in the detoxification of the Fusarium mycotoxin deoxynivalenol by the transfer of glucose from UDP-D-glucose to the hydroxyl group at C-3, forming deoxynivalenol-3-O-beta-D-glucoside. This is UDP-glucosyltransferase UGT13248 from Hordeum vulgare subsp. vulgare (Domesticated barley).